The following is a 340-amino-acid chain: Probable protein phosphatase 2C 21 (340 aa).

The disordered stretch occupies residues 1 to 21 (MGASPSRPLEQSPSSSEGENH). Residues 24–305 (KYASYTTQGF…DNATAILVKF (282 aa)) form the PPM-type phosphatase domain. 4 residues coordinate Mn(2+): D58, G59, D254, and D296. The segment at 311–340 (DPDEVASARDEHQHNPEGGDEKLDINNDND) is disordered. The segment covering 316–340 (ASARDEHQHNPEGGDEKLDINNDND) has biased composition (basic and acidic residues).

Belongs to the PP2C family. Mg(2+) serves as cofactor. The cofactor is Mn(2+).

It catalyses the reaction O-phospho-L-seryl-[protein] + H2O = L-seryl-[protein] + phosphate. The catalysed reaction is O-phospho-L-threonyl-[protein] + H2O = L-threonyl-[protein] + phosphate. The chain is Probable protein phosphatase 2C 21 from Oryza sativa subsp. japonica (Rice).